The primary structure comprises 452 residues: Pup--protein ligase (452 aa).

Glu-9 provides a ligand contact to Mg(2+). Arg-53 is an ATP binding site. A Mg(2+)-binding site is contributed by Tyr-55. Asp-57 (proton acceptor) is an active-site residue. A Mg(2+)-binding site is contributed by Glu-63. The ATP site is built by Thr-66 and Trp-419.

This sequence belongs to the Pup ligase/Pup deamidase family. Pup-conjugating enzyme subfamily.

The enzyme catalyses ATP + [prokaryotic ubiquitin-like protein]-L-glutamate + [protein]-L-lysine = ADP + phosphate + N(6)-([prokaryotic ubiquitin-like protein]-gamma-L-glutamyl)-[protein]-L-lysine.. The protein operates within protein degradation; proteasomal Pup-dependent pathway. It functions in the pathway protein modification; protein pupylation. In terms of biological role, catalyzes the covalent attachment of the prokaryotic ubiquitin-like protein modifier Pup to the proteasomal substrate proteins, thereby targeting them for proteasomal degradation. This tagging system is termed pupylation. The ligation reaction involves the side-chain carboxylate of the C-terminal glutamate of Pup and the side-chain amino group of a substrate lysine. The chain is Pup--protein ligase from Mycolicibacterium gilvum (strain PYR-GCK) (Mycobacterium gilvum (strain PYR-GCK)).